The sequence spans 110 residues: Large ribosomal subunit protein uL22 (110 aa).

This sequence belongs to the universal ribosomal protein uL22 family. In terms of assembly, part of the 50S ribosomal subunit.

In terms of biological role, this protein binds specifically to 23S rRNA; its binding is stimulated by other ribosomal proteins, e.g. L4, L17, and L20. It is important during the early stages of 50S assembly. It makes multiple contacts with different domains of the 23S rRNA in the assembled 50S subunit and ribosome. Functionally, the globular domain of the protein is located near the polypeptide exit tunnel on the outside of the subunit, while an extended beta-hairpin is found that lines the wall of the exit tunnel in the center of the 70S ribosome. This is Large ribosomal subunit protein uL22 from Nitrosomonas eutropha (strain DSM 101675 / C91 / Nm57).